We begin with the raw amino-acid sequence, 1114 residues long: Transcriptional repressor NF-X1 (1114 aa).

The interaction with PABPC1 and PABC4 stretch occupies residues 9 to 26 (GTFKFNTDAAEFIPQERK). Disordered regions lie at residues 20 to 220 (FIPQ…CRKP), 232 to 287 (QRRY…PTKS), and 299 to 325 (KSSR…FPRG). Residues serine 50, serine 81, serine 92, serine 126, serine 130, and serine 147 each carry the phosphoserine modification. Polar residues-rich tracts occupy residues 72 to 103 (SYAS…NQPW) and 121 to 142 (LSEQ…SGTN). Basic and acidic residues-rich tracts occupy residues 143 to 156 (PREH…KEVV), 185 to 202 (LRSE…DENT), 232 to 248 (QRRY…EGAR), and 304 to 315 (VNQEKTAVRRQD). Serine 320 carries the phosphoserine modification. The segment at 352–403 (CMVCCELVQVTAPVWSCQSCFHVFHLNCIKKWARSPASHADGQSGWRCPACQ) adopts an RING-type; atypical zinc-finger fold. 8 NF-X1-type zinc fingers span residues 447–465 (CPHS…PCPA), 500–519 (CGQH…PCRI), 561–580 (CGSH…PCPR), 626–649 (CGSS…PCSR), 688–707 (CGRH…KCPL), 715–734 (CGLH…TCWQ), 826–848 (CGMH…ACKQ), and 857–878 (CGHP…ACKA). The R3H domain occupies 988-1056 (LKFVSDVEKE…KRNVVVTAVR (69 aa)). Residues 1071-1095 (ERETQTRPPPPIPHHRHQADKAPGS) form a disordered region.

Belongs to the NFX1 family. As to quaternary structure, interacts with PABPC1 and PABPC4. Ubiquitously expressed, with highest levels in thymus.

Its subcellular location is the nucleus. Binds to the X-box motif of MHC class II genes and represses their expression. May play an important role in regulating the duration of an inflammatory response by limiting the period in which MHC class II molecules are induced by interferon-gamma. Together with PABPC1 or PABPC4, acts as a coactivator for TERT expression. Mediates E2-dependent ubiquitination. In Mus musculus (Mouse), this protein is Transcriptional repressor NF-X1 (Nfx1).